The following is a 264-amino-acid chain: Thymidylate synthase (264 aa).

DUMP is bound at residue arginine 21. Histidine 51 contributes to the (6R)-5,10-methylene-5,6,7,8-tetrahydrofolate binding site. 126–127 (RR) is a dUMP binding site. The active-site Nucleophile is cysteine 146. DUMP contacts are provided by residues 166–169 (RSAD), asparagine 177, and 207–209 (HIY). Residue aspartate 169 participates in (6R)-5,10-methylene-5,6,7,8-tetrahydrofolate binding. Serine 263 lines the (6R)-5,10-methylene-5,6,7,8-tetrahydrofolate pocket.

The protein belongs to the thymidylate synthase family. Bacterial-type ThyA subfamily. Homodimer.

Its subcellular location is the cytoplasm. It carries out the reaction dUMP + (6R)-5,10-methylene-5,6,7,8-tetrahydrofolate = 7,8-dihydrofolate + dTMP. The protein operates within pyrimidine metabolism; dTTP biosynthesis. Functionally, catalyzes the reductive methylation of 2'-deoxyuridine-5'-monophosphate (dUMP) to 2'-deoxythymidine-5'-monophosphate (dTMP) while utilizing 5,10-methylenetetrahydrofolate (mTHF) as the methyl donor and reductant in the reaction, yielding dihydrofolate (DHF) as a by-product. This enzymatic reaction provides an intracellular de novo source of dTMP, an essential precursor for DNA biosynthesis. This chain is Thymidylate synthase, found in Exiguobacterium sp. (strain ATCC BAA-1283 / AT1b).